Reading from the N-terminus, the 409-residue chain is uncharacterized protein (409 aa).

The N-acetyltransferase domain occupies 3–162 (TDVRVLRQDD…DDVRLRYAVP (160 aa)). Residues 82–84 (VSV), 90–95 (RRGVLT), and 118–119 (SE) each bind acetyl-CoA. Tyr123 (proton donor) is an active-site residue. Phe409 serves as the catalytic Proton acceptor; via carboxylate.

The protein belongs to the acetyltransferase Eis family. As to quaternary structure, homohexamer; trimer of dimers.

This is an uncharacterized protein from Streptomyces avermitilis (strain ATCC 31267 / DSM 46492 / JCM 5070 / NBRC 14893 / NCIMB 12804 / NRRL 8165 / MA-4680).